The primary structure comprises 811 residues: Phenylalanine--tRNA ligase beta subunit (811 aa).

The 117-residue stretch at 40 to 156 (AEKNENIVVG…EDIEVGSKVD (117 aa)) folds into the tRNA-binding domain. The 76-residue stretch at 411-486 (KSTKEVKVPL…RIHGYDHLPY (76 aa)) folds into the B5 domain. Positions 464, 470, 473, and 474 each coordinate Mg(2+). Residues 717-810 (PRYPSVSRDI…VNKKFGSYVR (94 aa)) form the FDX-ACB domain.

It belongs to the phenylalanyl-tRNA synthetase beta subunit family. Type 1 subfamily. As to quaternary structure, tetramer of two alpha and two beta subunits. Mg(2+) is required as a cofactor.

The protein resides in the cytoplasm. It catalyses the reaction tRNA(Phe) + L-phenylalanine + ATP = L-phenylalanyl-tRNA(Phe) + AMP + diphosphate + H(+). In Oceanobacillus iheyensis (strain DSM 14371 / CIP 107618 / JCM 11309 / KCTC 3954 / HTE831), this protein is Phenylalanine--tRNA ligase beta subunit.